A 311-amino-acid chain; its full sequence is Methionyl-tRNA formyltransferase (311 aa).

Residue 112 to 115 (SLLP) participates in (6S)-5,6,7,8-tetrahydrofolate binding.

The protein belongs to the Fmt family.

It catalyses the reaction L-methionyl-tRNA(fMet) + (6R)-10-formyltetrahydrofolate = N-formyl-L-methionyl-tRNA(fMet) + (6S)-5,6,7,8-tetrahydrofolate + H(+). In terms of biological role, attaches a formyl group to the free amino group of methionyl-tRNA(fMet). The formyl group appears to play a dual role in the initiator identity of N-formylmethionyl-tRNA by promoting its recognition by IF2 and preventing the misappropriation of this tRNA by the elongation apparatus. The polypeptide is Methionyl-tRNA formyltransferase (Bradyrhizobium sp. (strain ORS 278)).